A 256-amino-acid chain; its full sequence is uncharacterized protein (256 aa).

2 disordered regions span residues 1–38 (MGKT…PNRD) and 51–75 (PRPS…RCPQ).

This is an uncharacterized protein from Homo sapiens (Human).